Reading from the N-terminus, the 215-residue chain is Pyrrolidone-carboxylate peptidase (215 aa).

Active-site residues include Glu80, Cys143, and His167.

Belongs to the peptidase C15 family. Homotetramer.

It is found in the cytoplasm. The enzyme catalyses Release of an N-terminal pyroglutamyl group from a polypeptide, the second amino acid generally not being Pro.. In terms of biological role, removes 5-oxoproline from various penultimate amino acid residues except L-proline. The chain is Pyrrolidone-carboxylate peptidase from Bacillus anthracis.